The sequence spans 137 residues: Kunitz-type trypsin inhibitor alpha chain (137 aa).

Cysteines 40 and 86 form a disulfide.

This sequence belongs to the protease inhibitor I3 (leguminous Kunitz-type inhibitor) family. Heterodimer of an alpha and a beta chain linked by a disulfide bond.

Functionally, inhibition of trypsin. This chain is Kunitz-type trypsin inhibitor alpha chain, found in Neltuma juliflora (Mesquite).